The primary structure comprises 219 residues: Ribosomal RNA large subunit methyltransferase E (219 aa).

S-adenosyl-L-methionine is bound by residues Gly-60, Trp-62, Asp-85, Asp-101, and Asp-126. The active-site Proton acceptor is Lys-166.

The protein belongs to the class I-like SAM-binding methyltransferase superfamily. RNA methyltransferase RlmE family.

It localises to the cytoplasm. The catalysed reaction is uridine(2552) in 23S rRNA + S-adenosyl-L-methionine = 2'-O-methyluridine(2552) in 23S rRNA + S-adenosyl-L-homocysteine + H(+). Specifically methylates the uridine in position 2552 of 23S rRNA at the 2'-O position of the ribose in the fully assembled 50S ribosomal subunit. This Bordetella avium (strain 197N) protein is Ribosomal RNA large subunit methyltransferase E.